We begin with the raw amino-acid sequence, 254 residues long: MNDEEEMNEEGIAAASNNTTTANDSMWINIMQTEVTRLSSKVTAHEHNVREMFEHRARDAKTAMDDMVSEMNKRMDDLAARIVVLEDEKAELRRINQRLTEKVRDKDMEKAAVNDIGIKNKDRHLPEVDGSQPMITNDVSYHLVEDACRRSARKLYLLVEEVKLYKPDCKFEDYRHISSTPRINTWDSDYDEEEHERQKQTIKTLLEPLIVKIGDTGLVDIRRLYKACIRCDMSSSASVMRKDCFYDRDVANMM.

The stretch at D66 to A111 forms a coiled coil.

This is an uncharacterized protein from Ostreid herpesvirus 1 (isolate France) (OsHV-1).